The primary structure comprises 960 residues: Leucine-rich repeat receptor-like serine/threonine-protein kinase SKM1 (960 aa).

An N-terminal signal peptide occupies residues 1–29; that stretch reads MSTSHHHHHPPYLITTLFFLFLNFSCLHA. Residues 30 to 634 are Extracellular-facing; sequence NELELLLSFK…VRKRSTKSWW (605 aa). Cysteines 61 and 68 form a disulfide. N-linked (GlcNAc...) asparagine glycans are attached at residues Asn-70, Asn-83, Asn-103, Asn-108, Asn-129, and Asn-134. LRR repeat units follow at residues 71 to 96, 97 to 120, 122 to 146, 149 to 168, 169 to 194, 196 to 216, 217 to 240, 241 to 264, 265 to 288, 290 to 312, 313 to 336, 338 to 360, 361 to 384, 386 to 408, 409 to 432, 434 to 454, 455 to 477, 478 to 501, 503 to 525, 526 to 549, 550 to 573, and 575 to 598; these read ISRVVSLDLSGKNMSGQILTAATFRL, PFLQTINLSNNNLSGPIPHDIFTT, SPSLRYLNLSNNNFSGSIPRGFLPN, TLDLSNNMFTGEIYNDIGVF, SNLRVLDLGGNVLTGHVPGYLGNLSR, EFLTLASNQLTGGVPVELGKM, KNLKWIYLGYNNLSGEIPYQIGGL, SSLNHLDLVYNNLSGPIPPSLGDL, KKLEYMFLYQNKLSGQIPPSIFSL, NLISLDFSDNSLSGEIPELVAQM, QSLEILHLFSNNLTGKIPEGVTSL, RLKVLQLWSNRFSGGIPANLGKH, NNLTVLDLSTNNLTGKLPDTLCDS, HLTKLILFSNSLDSQIPPSLGMC, QSLERVRLQNNGFSGKLPRGFTKL, LVNFLDLSNNNLQGNINTWDM, PQLEMLDLSVNKFFGELPDFSRS, KRLKKLDLSRNKISGVVPQGLMTF, EIMDLDLSENEITGVIPRELSSC, KNLVNLDLSHNNFTGEIPSSFAEF, QVLSDLDLSCNQLSGEIPKNLGNI, and SLVQVNISHNLLHGSLPFTGAFLA. Asn-191 carries N-linked (GlcNAc...) asparagine glycosylation. The short motif at 221 to 226 is the CLE45 peptide binding element; the sequence is WIYLGY. N-linked (GlcNAc...) asparagine glycans are attached at residues Asn-228 and Asn-252. An N-linked (GlcNAc...) asparagine glycan is attached at Asn-324. 2 N-linked (GlcNAc...) asparagine glycosylation sites follow: Asn-362 and Asn-372. The N-linked (GlcNAc...) asparagine glycan is linked to Asn-537. N-linked (GlcNAc...) asparagine glycans are attached at residues Asn-580 and Asn-600. The chain crosses the membrane as a helical span at residues 635–655; that stretch reads LIITSTFAAFLAVLVSGFFIV. The Cytoplasmic portion of the chain corresponds to 656–960; that stretch reads LVFQRTHNVL…TYLSKILSLA (305 aa). Positions 691-953 constitute a Protein kinase domain; that stretch reads FTVNTILSSL…SSSSSCTTYL (263 aa). Thr-692 carries the post-translational modification Phosphothreonine. Residues 697–705 and Lys-717 contribute to the ATP site; that span reads LSSLKDQNV. Residue Tyr-834 is modified to Phosphotyrosine.

This sequence belongs to the protein kinase superfamily. Ser/Thr protein kinase family. As to quaternary structure, self-interacts. Binds to CLE45 present in the pistil, particularly under relatively high temperature (at 30 degrees Celsius). In terms of tissue distribution, expressed in pollen grains and roots vascular tissues. Present in roots.

Its subcellular location is the cell membrane. It catalyses the reaction L-seryl-[protein] + ATP = O-phospho-L-seryl-[protein] + ADP + H(+). The enzyme catalyses L-threonyl-[protein] + ATP = O-phospho-L-threonyl-[protein] + ADP + H(+). Its function is as follows. Receptor with a serine/threonine-protein kinase activity. Together with SKM2, LRR-rich receptor-like kinase (LRR-RLK) required for male fertility by the perception of CLE43 and CLE45 peptides and the transduction of their promoting action in pollen tubes, especially under relatively high temperature (at 30 degrees Celsius), thus conferring tolerance against high temperature probably through the maintenance of mitochondrial activity. Seems to not be involved in the perception of CLE45 peptide in roots. This is Leucine-rich repeat receptor-like serine/threonine-protein kinase SKM1 from Arabidopsis thaliana (Mouse-ear cress).